The primary structure comprises 474 residues: Calcitonin receptor (474 aa).

The first 24 residues, 1-24 (MRFTFTSRCLALFLLLNHPTPILP), serve as a signal peptide directing secretion. The Extracellular portion of the chain corresponds to 25-146 (AFSNQTYPTI…FTPEKLKNAY (122 aa)). 4 N-linked (GlcNAc...) asparagine glycosylation sites follow: Asn-28, Asn-73, Asn-125, and Asn-130. 3 disulfide bridges follow: Cys-55–Cys-81, Cys-72–Cys-112, and Cys-95–Cys-134. Residues 147–169 (VLYYLAIVGHSLSIFTLVISLGI) form a helical membrane-spanning segment. Topologically, residues 170-181 (FVFFRSLGCQRV) are cytoplasmic. The helical transmembrane segment at 182 to 202 (TLHKNMFLTYILNSMIIIIHL) threads the bilayer. Topologically, residues 203–219 (VEVVPNGELVRRDPVSC) are extracellular. Cysteines 219 and 289 form a disulfide. Residues 220 to 242 (KILHFFHQYMMACNYFWMLCEGI) form a helical membrane-spanning segment. Over 243-259 (YLHTLIVVAVFTEKQRL) the chain is Cytoplasmic. A helical transmembrane segment spans residues 260–280 (RWYYLLGWGFPLVPTTIHAIT). Residues 281 to 296 (RAVYFNDNCWLSVETH) lie on the Extracellular side of the membrane. A helical transmembrane segment spans residues 297-320 (LLYIIHGPVMAALVVNFFFLLNIV). Over 321-340 (RVLVTKMRETHEAESHMYLK) the chain is Cytoplasmic. The helical transmembrane segment at 341–359 (AVKATMILVPLLGIQFVVF) threads the bilayer. At 360–367 (PWRPSNKM) the chain is on the extracellular side. A helical transmembrane segment spans residues 368-394 (LGKIYDYVMHSLIHFQGFFVATIYCFC). The Cytoplasmic portion of the chain corresponds to 395–474 (NNEVQTTVKR…LNIIEQESSA (80 aa)).

This sequence belongs to the G-protein coupled receptor 2 family. In terms of assembly, heterodimer of CALCR and RAMP1, RAMP2 or RAMP3; the receptor complexes function as AMYR1, AMYR2 and AMYR3 receptors, respectively, and respond to amylin/IAPP, calcitonin/CT and CGRP1 ligands. Interacts with GPRASP2.

The protein resides in the cell membrane. Its activity is regulated as follows. Sensitive to cholera toxin. Functionally, g protein-coupled receptor activated by ligand peptides amylin (IAPP), calcitonin (CT/CALCA) and calcitonin gene-related peptide type 1 (CGRP1/CALCA). CALCR interacts with receptor-activity-modifying proteins RAMP1, 2 and 3 to form receptor complexes AMYR1, 2 and 3, respectively. IAPP, CT and CGRP1 activate CALCR and AMYRs with distinct modes of receptor activation resulting in specific phenotypes. Ligand binding causes a conformation change that triggers signaling via guanine nucleotide-binding proteins (G proteins) and modulates the activity of downstream effectors. Activates cAMP-dependent pathway. Its function is as follows. Non-functional protein. Unable to couple to G proteins and activate adenylyl cyclase. Does not undergo receptor internalization following ligand binding. In Homo sapiens (Human), this protein is Calcitonin receptor.